The primary structure comprises 376 residues: Sterol 24-C-methyltransferase (376 aa).

Belongs to the class I-like SAM-binding methyltransferase superfamily. Erg6/SMT family.

It catalyses the reaction zymosterol + S-adenosyl-L-methionine = fecosterol + S-adenosyl-L-homocysteine + H(+). It functions in the pathway steroid metabolism; ergosterol biosynthesis; ergosterol from zymosterol: step 1/5. Its activity is regulated as follows. Substrate analogs 25-azalanosterol and 24(R,S),25-epiminolanosterol act as inhibitors. Sterol 24-C-methyltransferase; part of the third module of ergosterol biosynthesis pathway that includes the late steps of the pathway. ERG6 catalyzes the methyl transfer from S-adenosyl-methionine to the C-24 of zymosterol to form fecosterol. The third module or late pathway involves the ergosterol synthesis itself through consecutive reactions that mainly occur in the endoplasmic reticulum (ER) membrane. Firstly, the squalene synthase ERG9 catalyzes the condensation of 2 farnesyl pyrophosphate moieties to form squalene, which is the precursor of all steroids. Squalene synthase is crucial for balancing the incorporation of farnesyl diphosphate (FPP) into sterol and nonsterol isoprene synthesis. Secondly, the squalene epoxidase ERG1 catalyzes the stereospecific oxidation of squalene to (S)-2,3-epoxysqualene, which is considered to be a rate-limiting enzyme in steroid biosynthesis. Then, the lanosterol synthase ERG7 catalyzes the cyclization of (S)-2,3 oxidosqualene to lanosterol, a reaction that forms the sterol core. In the next steps, lanosterol is transformed to zymosterol through a complex process involving various demethylation, reduction and desaturation reactions. The lanosterol 14-alpha-demethylase ERG11 (also known as CYP51) catalyzes C14-demethylation of lanosterol to produce 4,4'-dimethyl cholesta-8,14,24-triene-3-beta-ol, which is critical for ergosterol biosynthesis. The C-14 reductase ERG24 reduces the C14=C15 double bond of 4,4-dimethyl-cholesta-8,14,24-trienol to produce 4,4-dimethyl-cholesta-8,24-dienol. 4,4-dimethyl-cholesta-8,24-dienol is substrate of the C-4 demethylation complex ERG25-ERG26-ERG27 in which ERG25 catalyzes the three-step monooxygenation required for the demethylation of 4,4-dimethyl and 4alpha-methylsterols, ERG26 catalyzes the oxidative decarboxylation that results in a reduction of the 3-beta-hydroxy group at the C-3 carbon to an oxo group, and ERG27 is responsible for the reduction of the keto group on the C-3. ERG28 has a role as a scaffold to help anchor ERG25, ERG26 and ERG27 to the endoplasmic reticulum and ERG29 regulates the activity of the iron-containing C4-methylsterol oxidase ERG25. Then, the sterol 24-C-methyltransferase ERG6 catalyzes the methyl transfer from S-adenosyl-methionine to the C-24 of zymosterol to form fecosterol. The C-8 sterol isomerase ERG2 catalyzes the reaction which results in unsaturation at C-7 in the B ring of sterols and thus converts fecosterol to episterol. The sterol-C5-desaturase ERG3 then catalyzes the introduction of a C-5 double bond in the B ring to produce 5-dehydroepisterol. The C-22 sterol desaturase ERG5 further converts 5-dehydroepisterol into ergosta-5,7,22,24(28)-tetraen-3beta-ol by forming the C-22(23) double bond in the sterol side chain. Finally, ergosta-5,7,22,24(28)-tetraen-3beta-ol is substrate of the C-24(28) sterol reductase ERG4 to produce ergosterol. In Candida albicans (strain SC5314 / ATCC MYA-2876) (Yeast), this protein is Sterol 24-C-methyltransferase.